Here is a 91-residue protein sequence, read N- to C-terminus: Small ribosomal subunit protein uS19 (91 aa).

Belongs to the universal ribosomal protein uS19 family.

Functionally, protein S19 forms a complex with S13 that binds strongly to the 16S ribosomal RNA. The sequence is that of Small ribosomal subunit protein uS19 from Ectopseudomonas mendocina (strain ymp) (Pseudomonas mendocina).